The following is a 396-amino-acid chain: Anticodon nuclease (396 aa).

In terms of biological role, anticodon endonuclease (ACNase) that triggers the cleavage ligation of tRNA(Lys). It is activated by T4 stp protein and masked by the prrD protein (the endonuclease subunit of EcoprrI). The prr locus restricts phage T4 mutants lacking polynucleotide kinase or RNA ligase; T4 mutants lacking these genes manifest a T4-induced anticodon nuclease (ACNase). It is thought that Stp and other T4-encoded ACNase factors counteract the masking agents, thus activating the latent ACNase. This chain is Anticodon nuclease, found in Escherichia coli.